The sequence spans 286 residues: MMKQKTIAKEFSVTGVGLHSGVDVSMTVKPADIDSGIVFRRADLTPVVDIKVTPSSIKEAIMCTLLTKDGDQNLSVSTIEHLMSAFAMFEVDNVLIEVNAPELPVMDGSSYEFTQLLKQVGIVEQNSARKGIKILKPVRVEHEDKFAEVLPSDTLKYEFKIHWDHPVIAATNDHIVFEYDLDEYIKMVSKARTFGFYEQLAYLHQNNLAKGASLDNAVGVTNEGVLNEGGLRYDDEFVRHKLLDAIGDFYVGGYILGHFNCFKSGHTLNNKLLHAVFADKDAWEYI.

His-81, His-240, and Asp-244 together coordinate Zn(2+). His-266 functions as the Proton donor in the catalytic mechanism.

Belongs to the LpxC family. The cofactor is Zn(2+).

The enzyme catalyses a UDP-3-O-[(3R)-3-hydroxyacyl]-N-acetyl-alpha-D-glucosamine + H2O = a UDP-3-O-[(3R)-3-hydroxyacyl]-alpha-D-glucosamine + acetate. Its pathway is glycolipid biosynthesis; lipid IV(A) biosynthesis; lipid IV(A) from (3R)-3-hydroxytetradecanoyl-[acyl-carrier-protein] and UDP-N-acetyl-alpha-D-glucosamine: step 2/6. Its function is as follows. Catalyzes the hydrolysis of UDP-3-O-myristoyl-N-acetylglucosamine to form UDP-3-O-myristoylglucosamine and acetate, the committed step in lipid A biosynthesis. The protein is UDP-3-O-acyl-N-acetylglucosamine deacetylase of Francisella tularensis subsp. tularensis (strain FSC 198).